The following is a 262-amino-acid chain: Thiazole synthase (262 aa).

K96 (schiff-base intermediate with DXP) is an active-site residue. 1-deoxy-D-xylulose 5-phosphate is bound by residues G157, 184–185, and 206–207; these read AG and NT.

Belongs to the ThiG family. Homotetramer. Forms heterodimers with either ThiH or ThiS.

The protein localises to the cytoplasm. It catalyses the reaction [ThiS sulfur-carrier protein]-C-terminal-Gly-aminoethanethioate + 2-iminoacetate + 1-deoxy-D-xylulose 5-phosphate = [ThiS sulfur-carrier protein]-C-terminal Gly-Gly + 2-[(2R,5Z)-2-carboxy-4-methylthiazol-5(2H)-ylidene]ethyl phosphate + 2 H2O + H(+). It participates in cofactor biosynthesis; thiamine diphosphate biosynthesis. Catalyzes the rearrangement of 1-deoxy-D-xylulose 5-phosphate (DXP) to produce the thiazole phosphate moiety of thiamine. Sulfur is provided by the thiocarboxylate moiety of the carrier protein ThiS. In vitro, sulfur can be provided by H(2)S. The protein is Thiazole synthase of Legionella pneumophila (strain Lens).